Consider the following 226-residue polypeptide: PKHD-type hydroxylase PSPA7_5129 (226 aa).

The Fe2OG dioxygenase domain occupies 78-178 (KVFPPLFNCY…RYASFFWTQS (101 aa)). The Fe cation site is built by His96, Asp98, and His159. Arg169 contacts 2-oxoglutarate.

Fe(2+) is required as a cofactor. Requires L-ascorbate as cofactor.

The sequence is that of PKHD-type hydroxylase PSPA7_5129 from Pseudomonas paraeruginosa (strain DSM 24068 / PA7) (Pseudomonas aeruginosa (strain PA7)).